Here is a 148-residue protein sequence, read N- to C-terminus: uncharacterized protein (148 aa).

A helical transmembrane segment spans residues 1–21; it reads MLQNYAIVLGMAVAVAIWYFF. The segment at 27–61 is disordered; the sequence is APPGPNPPKPDPPKPDPPKMHMPKKKPHWMDPHLT.

The protein resides in the host membrane. This is an uncharacterized protein from Frog virus 3 (isolate Goorha) (FV-3).